A 358-amino-acid polypeptide reads, in one-letter code: Heme A synthase (358 aa).

8 helical membrane passes run 22–42 (IQVWLYSILLLCLAIVLVGGA), 107–127 (VLGRLVGLVALLGLIWFWATK), 133–153 (ILFPLIVVPILIAFQGFIGWW), 172–192 (LAFHLITACLVIIFVTYLSRG), 208–228 (FAAWLVILVLIEIYLGALVAG), 269–289 (FIHRFFAYFLFIVSALHAFYV), 302–322 (AFLIFFIIIIQAILGILTLLH), and 324–344 (VPISLGLIHQSMALVVLCFAV). A heme-binding site is contributed by histidine 271. Histidine 332 provides a ligand contact to heme.

The protein belongs to the COX15/CtaA family. Type 2 subfamily. Interacts with CtaB. Heme b serves as cofactor.

Its subcellular location is the cell membrane. The catalysed reaction is Fe(II)-heme o + 2 A + H2O = Fe(II)-heme a + 2 AH2. It participates in porphyrin-containing compound metabolism; heme A biosynthesis; heme A from heme O: step 1/1. Its function is as follows. Catalyzes the conversion of heme O to heme A by two successive hydroxylations of the methyl group at C8. The first hydroxylation forms heme I, the second hydroxylation results in an unstable dihydroxymethyl group, which spontaneously dehydrates, resulting in the formyl group of heme A. This Bartonella tribocorum (strain CIP 105476 / IBS 506) protein is Heme A synthase.